A 75-amino-acid chain; its full sequence is U6-lycotoxin-Ls1d (75 aa).

The first 21 residues, 1–21 (MKLLLFTALVLVVISLIEVEA), serve as a signal peptide directing secretion. Positions 22-25 (ENER) are excised as a propeptide.

This sequence belongs to the neurotoxin 19 (CSTX) family. 06 (U6-Lctx) subfamily. In terms of processing, contains 4 disulfide bonds. Expressed by the venom gland.

The protein localises to the secreted. The sequence is that of U6-lycotoxin-Ls1d from Lycosa singoriensis (Wolf spider).